A 515-amino-acid chain; its full sequence is Probable cytosol aminopeptidase (515 aa).

Residues K274 and D279 each contribute to the Mn(2+) site. Residue K286 is part of the active site. Mn(2+) is bound by residues D297, D356, and E358. R360 is a catalytic residue.

This sequence belongs to the peptidase M17 family. Requires Mn(2+) as cofactor.

Its subcellular location is the cytoplasm. The catalysed reaction is Release of an N-terminal amino acid, Xaa-|-Yaa-, in which Xaa is preferably Leu, but may be other amino acids including Pro although not Arg or Lys, and Yaa may be Pro. Amino acid amides and methyl esters are also readily hydrolyzed, but rates on arylamides are exceedingly low.. It carries out the reaction Release of an N-terminal amino acid, preferentially leucine, but not glutamic or aspartic acids.. Presumably involved in the processing and regular turnover of intracellular proteins. Catalyzes the removal of unsubstituted N-terminal amino acids from various peptides. This Desulforapulum autotrophicum (strain ATCC 43914 / DSM 3382 / VKM B-1955 / HRM2) (Desulfobacterium autotrophicum) protein is Probable cytosol aminopeptidase.